A 368-amino-acid polypeptide reads, in one-letter code: MSAQSVEEDSILIIPTPDEEEKILRVKLEEDPDGEEGSSIPWNHLPDPEIFRQRFRQFGYQDSPGPREAVSQLRELCRLWLRPETHTKEQILELVVLEQFVAILPKELQTWVRDHHPENGEEAVTVLEDLESELDDPGQPVSLRRRKREVLVEDMVSQEEAQGLPSSELDAVENQLKWASWELHSLRHCDDDGRTENGALAPKQELPSAVESHEVPGTLNMGVPQIFKYGETCFPKGRFERKRNPSRKKQHICDECGKHFSQGSALILHQRIHSGEKPYGCVECGKAFSRSSILVQHQRVHTGEKPYKCLECGKAFSQNSGLINHQRIHTGEKPYECVQCGKSYSQSSNLFRHXXXHNAXKLLNVVKV.

Lys-22 participates in a covalent cross-link: Glycyl lysine isopeptide (Lys-Gly) (interchain with G-Cter in SUMO2). Residue Lys-27 forms a Glycyl lysine isopeptide (Lys-Gly) (interchain with G-Cter in SUMO1); alternate linkage. Residue Lys-27 forms a Glycyl lysine isopeptide (Lys-Gly) (interchain with G-Cter in SUMO2); alternate linkage. In terms of domain architecture, SCAN box spans 52-134 (RQRFRQFGYQ…TVLEDLESEL (83 aa)). Phosphoserine occurs at positions 132 and 142. Glycyl lysine isopeptide (Lys-Gly) (interchain with G-Cter in SUMO2) cross-links involve residues Lys-147, Lys-177, and Lys-236. A C2H2-type 1 zinc finger spans residues 251–273 (HICDECGKHFSQGSALILHQRIH). Residues 251–301 (HICDECGKHFSQGSALILHQRIHSGEKPYGCVECGKAFSRSSILVQHQRVH) form a necessary and sufficient for nuclear localization region. At Ser-274 the chain carries Phosphoserine. Glycyl lysine isopeptide (Lys-Gly) (interchain with G-Cter in SUMO2) cross-links involve residues Lys-277 and Lys-286. 3 C2H2-type zinc fingers span residues 279-301 (YGCVECGKAFSRSSILVQHQRVH), 307-329 (YKCLECGKAFSQNSGLINHQRIH), and 335-357 (YECVQCGKSYSQSSNLFRHXXXH). At Ser-292 the chain carries Phosphoserine. A Phosphotyrosine modification is found at Tyr-335. Glycyl lysine isopeptide (Lys-Gly) (interchain with G-Cter in SUMO2) cross-links involve residues Lys-361 and Lys-367.

This sequence belongs to the krueppel C2H2-type zinc-finger protein family. Post-translationally, sumoylated.

The protein resides in the nucleus. In terms of biological role, transcription factor required for myelination of differentiated oligodendrocytes. Required for the conversion of oligodendrocytes from the premyelinating to the myelinating state. In the developing central nervous system (CNS), involved in the maintenance in the progenitor stage by promoting the cell cycle. Specifically binds to the 5'-TCAT-3' DNA sequence. Has transcription repressor activity in vitro. The chain is Zinc finger protein 24 (ZNF24) from Pan paniscus (Pygmy chimpanzee).